Consider the following 388-residue polypeptide: Serine/threonine-protein phosphatase sitA (388 aa).

Residues D67 and H69 each coordinate Mn(2+). The disordered stretch occupies residues 86 to 146 (PDGSEAEAPK…SQRDRSSSSG (61 aa)). Positions 161 and 193 each coordinate Mn(2+). The active-site Proton donor is the H194. Mn(2+) is bound by residues H243 and H317.

Belongs to the PPP phosphatase family. PP-6 (PP-V) subfamily. Mn(2+) is required as a cofactor.

It carries out the reaction O-phospho-L-threonyl-[protein] + H2O = L-threonyl-[protein] + phosphate. Its function is as follows. Protein phosphatase that acts as a modulator of pkcA/mpkA activity involved in the cell wall integrity pathway. Plays an important role in regulation of adhesion, cell wall integrity, biofilm formation, and virulence. In Aspergillus fumigatus (strain ATCC MYA-4609 / CBS 101355 / FGSC A1100 / Af293) (Neosartorya fumigata), this protein is Serine/threonine-protein phosphatase sitA.